The sequence spans 939 residues: U3 small nucleolar RNA-associated protein 21 (939 aa).

An N-acetylserine modification is found at Ser2. WD repeat units follow at residues Ala40–Val71, Val81–Glu111, Glu119–Thr158, Val168–Thr201, Gln208–Lys245, Ser252–Leu287, Tyr295–Gly347, Ser354–Glu388, Val415–Thr454, Val463–Lys497, Val505–Lys541, Ile546–Leu581, Gly583–Ile624, and Asp626–Ser664. Ser772 carries the post-translational modification Phosphoserine.

In terms of assembly, interacts with snoRNA U3. Interacts with MPP10. Interacts (via WD repeats) with UTP18. Component of the ribosomal small subunit (SSU) processome composed of at least 40 protein subunits and snoRNA U3.

The protein localises to the nucleus. Its subcellular location is the nucleolus. Functionally, involved in nucleolar processing of pre-18S ribosomal RNA and ribosome assembly. This chain is U3 small nucleolar RNA-associated protein 21 (UTP21), found in Saccharomyces cerevisiae (strain ATCC 204508 / S288c) (Baker's yeast).